The primary structure comprises 464 residues: Argininosuccinate lyase (464 aa).

This sequence belongs to the lyase 1 family. Argininosuccinate lyase subfamily.

Its subcellular location is the cytoplasm. The enzyme catalyses 2-(N(omega)-L-arginino)succinate = fumarate + L-arginine. The protein operates within amino-acid biosynthesis; L-arginine biosynthesis; L-arginine from L-ornithine and carbamoyl phosphate: step 3/3. This is Argininosuccinate lyase from Desulfotalea psychrophila (strain LSv54 / DSM 12343).